Reading from the N-terminus, the 206-residue chain is Threonine efflux protein (206 aa).

Residues 1-21 (MLMLFLTVAMVHIVALMSPGP) traverse the membrane as a helical segment. Residues 22-43 (DFFFVSQTAVSRSRKEAMMGVL) are Periplasmic-facing. The helical transmembrane segment at 44–64 (GITCGVMVWAGIALLGLHLII) threads the bilayer. Over 65 to 66 (EK) the chain is Cytoplasmic. The chain crosses the membrane as a helical span at residues 67–87 (MAWLHTLIMVGGGLYLCWMGY). Residues 88 to 149 (QMLRGALKKE…VGDNVGTTAR (62 aa)) are Periplasmic-facing. Residues 150-173 (WGIFALIIVETLAWFTVVASLFAL) traverse the membrane as a helical segment. Residues 174–206 (PQMRRGYQRLAKWIDGFAGALFAGFGIHLIISR) are Cytoplasmic-facing.

Belongs to the Rht family.

The protein resides in the cell inner membrane. Its function is as follows. Conducts the efflux of threonine. This chain is Threonine efflux protein (rhtC), found in Escherichia coli O157:H7.